The sequence spans 526 residues: Peptide chain release factor 3 (526 aa).

The tr-type G domain maps to 9-277 (DKRRTFAIIS…GIVEWAPKPL (269 aa)). GTP is bound by residues 18-25 (SHPDAGKT), 86-90 (DTPGH), and 140-143 (NKLD).

Belongs to the TRAFAC class translation factor GTPase superfamily. Classic translation factor GTPase family. PrfC subfamily.

The protein localises to the cytoplasm. Its function is as follows. Increases the formation of ribosomal termination complexes and stimulates activities of RF-1 and RF-2. It binds guanine nucleotides and has strong preference for UGA stop codons. It may interact directly with the ribosome. The stimulation of RF-1 and RF-2 is significantly reduced by GTP and GDP, but not by GMP. The protein is Peptide chain release factor 3 of Shewanella sp. (strain ANA-3).